A 204-amino-acid polypeptide reads, in one-letter code: Large ribosomal subunit protein uL4 (204 aa).

Positions 52–76 (AEVRGGGKKPWAQKGGGRARAGSRR) are disordered.

Belongs to the universal ribosomal protein uL4 family. Part of the 50S ribosomal subunit.

One of the primary rRNA binding proteins, this protein initially binds near the 5'-end of the 23S rRNA. It is important during the early stages of 50S assembly. It makes multiple contacts with different domains of the 23S rRNA in the assembled 50S subunit and ribosome. Its function is as follows. Forms part of the polypeptide exit tunnel. This chain is Large ribosomal subunit protein uL4, found in Sulfurimonas denitrificans (strain ATCC 33889 / DSM 1251) (Thiomicrospira denitrificans (strain ATCC 33889 / DSM 1251)).